The following is a 127-amino-acid chain: Holo-[acyl-carrier-protein] synthase (127 aa).

Mg(2+) is bound by residues Asp-7 and Glu-56.

Belongs to the P-Pant transferase superfamily. AcpS family. Mg(2+) serves as cofactor.

The protein resides in the cytoplasm. It carries out the reaction apo-[ACP] + CoA = holo-[ACP] + adenosine 3',5'-bisphosphate + H(+). Transfers the 4'-phosphopantetheine moiety from coenzyme A to a Ser of acyl-carrier-protein. The sequence is that of Holo-[acyl-carrier-protein] synthase from Leptospira biflexa serovar Patoc (strain Patoc 1 / Ames).